Reading from the N-terminus, the 227-residue chain is 2,3-bisphosphoglycerate-dependent phosphoglycerate mutase (227 aa).

Substrate is bound by residues 7–14 (RHGFSEWN), 20–21 (TG), Arg59, 86–89 (ERHY), Lys97, 113–114 (RR), and 182–183 (GN). His8 serves as the catalytic Tele-phosphohistidine intermediate. Residue Glu86 is the Proton donor/acceptor of the active site.

It belongs to the phosphoglycerate mutase family. BPG-dependent PGAM subfamily. In terms of assembly, homodimer.

It carries out the reaction (2R)-2-phosphoglycerate = (2R)-3-phosphoglycerate. Its pathway is carbohydrate degradation; glycolysis; pyruvate from D-glyceraldehyde 3-phosphate: step 3/5. Its function is as follows. Catalyzes the interconversion of 2-phosphoglycerate and 3-phosphoglycerate. In Glaesserella parasuis serovar 5 (strain SH0165) (Haemophilus parasuis), this protein is 2,3-bisphosphoglycerate-dependent phosphoglycerate mutase.